The following is a 657-amino-acid chain: MAEGSGEVVAVSATGAANGLNNGAGGTSATTCNPLSRKLHKILETRLDNDKEMLEALKALSTFFVENSLRTRRNLRGDIERKSLAINEEFVSIFKEVKEELESISEDVQAMSNCCQDMTSRLQAAKEQTQDLIVKTTKLQSESQKLEIRAQVADAFLSKFQLTSDEMSLLRGTREGPITEDFFKALGRVKQIHNDVKVLLRTNQQTAGLEIMEQMALLQETAYERLYRWAQSECRTLTQESCDVSPVLTQAMEALQDRPVLYKYTLDEFGTARRSTVVRGFIDALTRGGPGGTPRPIEMHSHDPLRYVGDMLAWLHQATASEKEHLEALLKHVTTQGVEENIQEVVGHITEGVCRPLKVRIEQVIVAEPGAVLLYKISNLLKFYHHTISGIVGNSATALLTTIEEMHLLSKKIFFNSLSLHASKLMDKVELPPPDLGPSSALNQTLMLLREVLASHDSSVVPLDARQADFVQVLSCVLDPLLQMCTVSASNLGTADMATFMVNSLYMMKTTLALFEFTDRRLEMLQFQIEAHLDTLINEQASYVLTRVGLSYIYNTVQQHKPEQGSLANMPNLDSVTLKAAMVQFDRYLSAPDNLLIPQLNFLLSATVKEQIVKQSTELVCRAYGEVYAAVMNPINEYKDPENILHRSPQQVQTLLS.

It belongs to the COG6 family. In terms of assembly, component of the conserved oligomeric Golgi complex which is composed of eight different subunits and is required for normal Golgi morphology and localization.

The protein localises to the golgi apparatus membrane. Required for normal Golgi function. This is Conserved oligomeric Golgi complex subunit 6 (COG6) from Homo sapiens (Human).